We begin with the raw amino-acid sequence, 428 residues long: MIFAQEKLVDQGQGKWTVTIDGEQWIEFLKKAKNRLKANLVVPGFRKGKAPESETAKYLTPIKLYNEAFKIVIKPAFDFALTQENRIQNDNSPTPVIVKVSEKEIVIDFVFDLVLEVKIGEYKNISTIKKSTVEVSQEDVDNVIDMYRSRFAMQKEKEVSDQIQKGDIVTFDFKGYVDDQAFEGGEAKDFVLEIGSNQFVPGFEDSMIGLKVGENQEINVKFPEEYIPSLAGKDAKFVLNIKNIKEKILPAKDDELVKDLNLPDITTYVQLEEKVKKDVLEQKTKNNKSEFVENIIDEIIKTSEFQIPKTIVERQLKDVKKEFEDQLTQQKITLEKYKEITKISQEEIDEELKNDAIHRIKSFLVVSEIKNKENIKASEEAINTKFEEFANLYGIEVEKIKSLIDNQAIKHQVESELLETFIFENNGN.

Residues 166–250 form the PPIase FKBP-type domain; that stretch reads GDIVTFDFKG…IKNIKEKILP (85 aa).

It belongs to the FKBP-type PPIase family. Tig subfamily.

Its subcellular location is the cytoplasm. The catalysed reaction is [protein]-peptidylproline (omega=180) = [protein]-peptidylproline (omega=0). Involved in protein export. Acts as a chaperone by maintaining the newly synthesized protein in an open conformation. Functions as a peptidyl-prolyl cis-trans isomerase. In Mycoplasma capricolum subsp. capricolum (strain California kid / ATCC 27343 / NCTC 10154), this protein is Trigger factor.